A 448-amino-acid chain; its full sequence is uncharacterized protein (448 aa).

The helical transmembrane segment at 19 to 41 (LGLLVPFLLLLFSCTNTVGYGVL) threads the bilayer. Residues 105–181 (YSYATSVLDG…CFSHGLSLFD (77 aa)) form the SH3b domain.

It is found in the membrane. This is an uncharacterized protein from Treponema pallidum (strain Nichols).